The following is a 103-amino-acid chain: Small ribosomal subunit protein uS10 (103 aa).

The protein belongs to the universal ribosomal protein uS10 family. As to quaternary structure, part of the 30S ribosomal subunit.

Its function is as follows. Involved in the binding of tRNA to the ribosomes. The polypeptide is Small ribosomal subunit protein uS10 (Hahella chejuensis (strain KCTC 2396)).